The sequence spans 270 residues: Tetraspanin-17 (270 aa).

The Cytoplasmic segment spans residues 1-19 (MPGKHQHFQEPEVGCCGKY). A helical transmembrane segment spans residues 20–40 (FLFGFNIVFWVLGALFLAIGL). Over 41 to 63 (WAWSEKGVLSNISALTDLGGLDP) the chain is Extracellular. A glycan (N-linked (GlcNAc...) asparagine) is linked at Asn51. Residues 64-84 (VWLFVVVGGVMSVLGFAGCIG) form a helical membrane-spanning segment. Over 85-94 (ALRENTFLLK) the chain is Cytoplasmic. A helical membrane pass occupies residues 95-115 (FFSVFLGLIFFLELATGILAF). The Extracellular segment spans residues 116–234 (VFKDWIRDQL…GQFEKWLQDN (119 aa)). 4 disulfide bridges follow: Cys155–Cys223, Cys156–Cys188, Cys172–Cys182, and Cys189–Cys202. Asn171 is a glycosylation site (N-linked (GlcNAc...) asparagine). A helical transmembrane segment spans residues 235–255 (LIVVAGVFVGIALLQIFGICL). Over 256 to 270 (AQNLVSDIKAVKANW) the chain is Cytoplasmic.

This sequence belongs to the tetraspanin (TM4SF) family. As to quaternary structure, interacts with ADAM10; the interaction influences ADAM10 substrate specificity, endocytosis and turnover.

The protein resides in the cell membrane. In terms of biological role, part of TspanC8 subgroup, composed of 6 members that interact with the transmembrane metalloprotease ADAM10. This interaction is required for ADAM10 exit from the endoplasmic reticulum and for enzymatic maturation and trafficking to the cell surface as well as substrate specificity. Different TspanC8/ADAM10 complexes have distinct substrates. Seems to regulate VE-cadherin expression in endothelial cells probably through interaction with ADAM10, promoting leukocyte transmigration. This chain is Tetraspanin-17 (TSPAN17), found in Bos taurus (Bovine).